The following is a 117-amino-acid chain: MKLTMVLSVAFATLTFANEGILTFEGLGLARRQTICHTPGGSGCRASISGDQCCCTSCTPEDCSDLCKNGKQAAHEAQKQKKCAKCCNAGGESHELCCSIASAGIDCNPCTAGLRMC.

Residues 1 to 17 (MKLTMVLSVAFATLTFA) form the signal peptide. 8 cysteine pairs are disulfide-bonded: Cys36–Cys87, Cys44–Cys55, Cys53–Cys58, Cys54–Cys98, Cys63–Cys83, Cys67–Cys117, Cys86–Cys97, and Cys107–Cys110. The chitin-binding domain stretch occupies residues 87–117 (CNAGGESHELCCSIASAGIDCNPCTAGLRMC).

As to quaternary structure, interacts with host cell wall-associated kinase receptor Snn1.

Its subcellular location is the secreted. Its function is as follows. Necrotrophic effector that plays a critical role during fungal penetration, via its interaction with the host Snn1 protein. Snn1 is a member of the wall-associated kinase class of receptors, which are known to drive pathways for biotrophic pathogen resistance. Recognition of Tox1 by Snn1 induces mitogen-activated protein kinase genes such as MAPK3 and activates programmed cell death, which allows this necrotroph to gain nutrients and sporulate. Recognition of Tox1 by Snn1 also induces other plant defense responses, including oxidative burst and pathogenesis related (PR) gene expression. The development of necrosis and disease induced by Tox1, and particularly penetration during infection, requires light, which is probably related to the light-dependent expression of host Snn1. Tox1 plays an additional role in providing significant protection from wheat chitinases by binding chitin in the fungal cell wall. This chain is Cysteine rich necrotrophic effector Tox1, found in Phaeosphaeria nodorum (strain SN15 / ATCC MYA-4574 / FGSC 10173) (Glume blotch fungus).